We begin with the raw amino-acid sequence, 513 residues long: Xylose import ATP-binding protein XylG (513 aa).

2 consecutive ABC transporter domains span residues 5–242 (LEMK…VERE) and 259–505 (LRIE…LRSE). Position 37 to 44 (37 to 44 (GENGSGKS)) interacts with ATP.

This sequence belongs to the ABC transporter superfamily. Xylose importer (TC 3.A.1.2.4) family. The complex is composed of two ATP-binding proteins (XylG), two transmembrane proteins (XylH) and a solute-binding protein (XylF).

Its subcellular location is the cell inner membrane. It catalyses the reaction D-xylose(out) + ATP + H2O = D-xylose(in) + ADP + phosphate + H(+). Part of the ABC transporter complex XylFGH involved in xylose import. Responsible for energy coupling to the transport system. This is Xylose import ATP-binding protein XylG from Shigella flexneri.